The sequence spans 578 residues: Arginine--tRNA ligase (578 aa).

The 'HIGH' region signature appears at 122–132; the sequence is PNLAKEMHVGH.

It belongs to the class-I aminoacyl-tRNA synthetase family. Monomer.

It is found in the cytoplasm. The catalysed reaction is tRNA(Arg) + L-arginine + ATP = L-arginyl-tRNA(Arg) + AMP + diphosphate. This chain is Arginine--tRNA ligase, found in Pseudoalteromonas atlantica (strain T6c / ATCC BAA-1087).